A 122-amino-acid chain; its full sequence is Large ribosomal subunit protein uL14c (122 aa).

This sequence belongs to the universal ribosomal protein uL14 family. As to quaternary structure, part of the 50S ribosomal subunit.

It is found in the plastid. Binds to 23S rRNA. The chain is Large ribosomal subunit protein uL14c from Euglena longa (Euglenophycean alga).